The primary structure comprises 381 residues: Hps1-dma1 cluster transcription factor tfc7 (381 aa).

Positions 10–37 form a DNA-binding region, zn(2)-C6 fungal-type; sequence CDHCSATKIKCTQERPQCTRCRALGRDC. The disordered stretch occupies residues 41–88; the sequence is RSLRAGKPPRSSQGLNRKISNAPVLPRQNTPVSNPTSMSSKPEHWPTM. 2 stretches are compositionally biased toward polar residues: residues 50–59 and 67–80; these read RSSQGLNRKI and RQNTPVSNPTSMSS.

Its subcellular location is the nucleus. Its function is as follows. Transcription factor that regulates the expression of the hps1-dma1 gene cluster that probably mediates the biosynthesis a derivative of cyclopiazonic acid (CPA). Further studies are required to whether the CPA-like hps1-dma1 cluster is functional or a non-functional relic reflecting evolution of D.septosporum. The chain is Hps1-dma1 cluster transcription factor tfc7 (tfc7) from Dothistroma septosporum (strain NZE10 / CBS 128990) (Red band needle blight fungus).